We begin with the raw amino-acid sequence, 156 residues long: ATP synthase subunit b (156 aa).

The helical transmembrane segment at 3–23 (INFTLLAQALAFAGLIWIIAT) threads the bilayer.

This sequence belongs to the ATPase B chain family. As to quaternary structure, F-type ATPases have 2 components, F(1) - the catalytic core - and F(0) - the membrane proton channel. F(1) has five subunits: alpha(3), beta(3), gamma(1), delta(1), epsilon(1). F(0) has three main subunits: a(1), b(2) and c(10-14). The alpha and beta chains form an alternating ring which encloses part of the gamma chain. F(1) is attached to F(0) by a central stalk formed by the gamma and epsilon chains, while a peripheral stalk is formed by the delta and b chains.

It localises to the cell membrane. F(1)F(0) ATP synthase produces ATP from ADP in the presence of a proton or sodium gradient. F-type ATPases consist of two structural domains, F(1) containing the extramembraneous catalytic core and F(0) containing the membrane proton channel, linked together by a central stalk and a peripheral stalk. During catalysis, ATP synthesis in the catalytic domain of F(1) is coupled via a rotary mechanism of the central stalk subunits to proton translocation. In terms of biological role, component of the F(0) channel, it forms part of the peripheral stalk, linking F(1) to F(0). This is ATP synthase subunit b from Stenotrophomonas maltophilia (strain K279a).